The following is a 390-amino-acid chain: Type II methyltransferase M.SacI (390 aa).

The 367-residue stretch at 5-371 folds into the SAM-dependent MTase C5-type domain; it reads LPVISLFSGA…RALMEQLGYL (367 aa). Cys-96 is a catalytic residue.

It belongs to the class I-like SAM-binding methyltransferase superfamily. C5-methyltransferase family.

It carries out the reaction a 2'-deoxycytidine in DNA + S-adenosyl-L-methionine = a 5-methyl-2'-deoxycytidine in DNA + S-adenosyl-L-homocysteine + H(+). A beta methylase recognizes the double-stranded sequence 5'-GAGCTC-3', methylates C-4 on both strands, and protects the DNA from cleavage by the SacI endonuclease. The protein is Type II methyltransferase M.SacI of Streptomyces achromogenes.